We begin with the raw amino-acid sequence, 433 residues long: UDP-N-acetylglucosamine 1-carboxyvinyltransferase (433 aa).

Residue 34–35 (KN) participates in phosphoenolpyruvate binding. Residue Arg104 coordinates UDP-N-acetyl-alpha-D-glucosamine. Cys128 serves as the catalytic Proton donor. Residue Cys128 is modified to 2-(S-cysteinyl)pyruvic acid O-phosphothioketal. Positions 320 and 342 each coordinate UDP-N-acetyl-alpha-D-glucosamine.

It belongs to the EPSP synthase family. MurA subfamily.

The protein localises to the cytoplasm. The enzyme catalyses phosphoenolpyruvate + UDP-N-acetyl-alpha-D-glucosamine = UDP-N-acetyl-3-O-(1-carboxyvinyl)-alpha-D-glucosamine + phosphate. The protein operates within cell wall biogenesis; peptidoglycan biosynthesis. Cell wall formation. Adds enolpyruvyl to UDP-N-acetylglucosamine. The polypeptide is UDP-N-acetylglucosamine 1-carboxyvinyltransferase (Synechococcus sp. (strain CC9605)).